The sequence spans 232 residues: Aquaporin Z 2 (232 aa).

The next 2 membrane-spanning stretches (helical) occupy residues 9 to 29 (FLGTCWLVLGGCGSAVLASAF) and 32 to 52 (VGIGLLGVSFAFGLTVLTMAY). An NPA 1 motif is present at residues 63–65 (NPA). 3 helical membrane passes run 82-102 (VSYVIAQVAGAIIAAAVLYVI), 129-149 (LTAALVTEVVMTFFFLIIILG), and 158-178 (GFAPIAIGLALTLIHLVSIPV). The NPA 2 motif lies at 184-186 (NPA). The chain crosses the membrane as a helical span at residues 200–220 (LSQLWLFWIAPLFGAAIAGIV).

It belongs to the MIP/aquaporin (TC 1.A.8) family. In terms of assembly, homotetramer.

Its subcellular location is the cell inner membrane. The catalysed reaction is H2O(in) = H2O(out). Functionally, channel that permits osmotically driven movement of water in both directions. It is involved in the osmoregulation and in the maintenance of cell turgor during volume expansion in rapidly growing cells. It mediates rapid entry or exit of water in response to abrupt changes in osmolarity. The sequence is that of Aquaporin Z 2 from Rhizobium meliloti (strain 1021) (Ensifer meliloti).